A 93-amino-acid polypeptide reads, in one-letter code: MPRSLKKGPFVDGHLIKKVDVQNEAGTKNVIKTWSRRSMIVPAMLGHTIAVHNGKIHVPVFVTESMVGHKLGEFSPTRTFRGHVKDDRKSKRR.

Residues 74–93 (FSPTRTFRGHVKDDRKSKRR) are disordered. Basic and acidic residues predominate over residues 83–93 (HVKDDRKSKRR).

Belongs to the universal ribosomal protein uS19 family.

Protein S19 forms a complex with S13 that binds strongly to the 16S ribosomal RNA. In Streptomyces griseus subsp. griseus (strain JCM 4626 / CBS 651.72 / NBRC 13350 / KCC S-0626 / ISP 5235), this protein is Small ribosomal subunit protein uS19.